The following is a 149-amino-acid chain: Flagellar assembly factor FliW (149 aa).

It belongs to the FliW family. In terms of assembly, interacts with translational regulator CsrA and flagellin(s).

The protein localises to the cytoplasm. Its function is as follows. Acts as an anti-CsrA protein, binds CsrA and prevents it from repressing translation of its target genes, one of which is flagellin. Binds to flagellin and participates in the assembly of the flagellum. The polypeptide is Flagellar assembly factor FliW (Thermotoga neapolitana (strain ATCC 49049 / DSM 4359 / NBRC 107923 / NS-E)).